The sequence spans 231 residues: Dephospho-CoA kinase domain-containing protein (231 aa).

The 205-residue stretch at 3 to 207 (LVGLTGGIAS…RSLEYLPLRF (205 aa)) folds into the DPCK domain. Residue 8-15 (GGIASGKS) coordinates ATP.

This sequence belongs to the CoaE family.

In Homo sapiens (Human), this protein is Dephospho-CoA kinase domain-containing protein (DCAKD).